We begin with the raw amino-acid sequence, 380 residues long: Guanine nucleotide-binding protein subunit beta (380 aa).

WD repeat units follow at residues 64 to 94 (GHSGKVYSLDWTPEKNWIVSASQDGRLIVWN), 106 to 136 (LHCPWVMACAFAPNGQSVACGGLDSACSIFN), 155 to 186 (GHKGYVSSCQYVPDQETRLITSSGDQTCVLWD), 203 to 234 (GHTADVQSVSINSSNTNMFVSGSCDTTVRLWD), 247 to 277 (GHEDDVNSVKFFPDGHRFGTGSDDGTCRLFD), 296 to 326 (NELPTVTSIAFSISGRLLFAGYSNGDCYVWD), and 342 to 372 (SHDGRISCLGMSSDGSALCTGSWDKNLKIWA).

Belongs to the WD repeat G protein beta family. As to quaternary structure, g proteins are composed of 3 units, alpha, beta and gamma. Present in the root, leaf and tassel.

In terms of biological role, guanine nucleotide-binding proteins (G proteins) are involved as a modulator or transducer in various transmembrane signaling systems. The beta and gamma chains are required for the GTPase activity, for replacement of GDP by GTP, and for G protein-effector interaction. This chain is Guanine nucleotide-binding protein subunit beta (GB1), found in Zea mays (Maize).